We begin with the raw amino-acid sequence, 64 residues long: Small ribosomal subunit protein bS18c (64 aa).

It belongs to the bacterial ribosomal protein bS18 family. As to quaternary structure, part of the 30S ribosomal subunit.

Its subcellular location is the plastid. The protein localises to the chloroplast. The polypeptide is Small ribosomal subunit protein bS18c (rps18) (Bigelowiella natans (Pedinomonas minutissima)).